The chain runs to 452 residues: Bifunctional protein GlmU (452 aa).

The segment at 1–230 is pyrophosphorylase; sequence MSRSRSAIIL…ADEVLGVNSR (230 aa). UDP-N-acetyl-alpha-D-glucosamine-binding positions include 10 to 13, Lys-24, Gln-75, and 80 to 81; these read LAAG and GT. Asp-105 lines the Mg(2+) pocket. Residues Gly-141, Glu-156, Asn-171, and Asn-228 each coordinate UDP-N-acetyl-alpha-D-glucosamine. Mg(2+) is bound at residue Asn-228. Residues 231–251 form a linker region; that stretch reads ADLAEAEAAFQSRMRQSMMAD. An N-acetyltransferase region spans residues 252–452; that stretch reads GVTLIAPETV…ARKARKDSQT (201 aa). UDP-N-acetyl-alpha-D-glucosamine is bound by residues Arg-317 and Lys-335. The Proton acceptor role is filled by His-347. UDP-N-acetyl-alpha-D-glucosamine-binding residues include Tyr-350 and Asn-361. Residues Ala-364, 370–371, Ser-389, Thr-407, and Arg-424 contribute to the acetyl-CoA site; that span reads NY.

This sequence in the N-terminal section; belongs to the N-acetylglucosamine-1-phosphate uridyltransferase family. The protein in the C-terminal section; belongs to the transferase hexapeptide repeat family. In terms of assembly, homotrimer. The cofactor is Mg(2+).

The protein localises to the cytoplasm. The catalysed reaction is alpha-D-glucosamine 1-phosphate + acetyl-CoA = N-acetyl-alpha-D-glucosamine 1-phosphate + CoA + H(+). The enzyme catalyses N-acetyl-alpha-D-glucosamine 1-phosphate + UTP + H(+) = UDP-N-acetyl-alpha-D-glucosamine + diphosphate. The protein operates within nucleotide-sugar biosynthesis; UDP-N-acetyl-alpha-D-glucosamine biosynthesis; N-acetyl-alpha-D-glucosamine 1-phosphate from alpha-D-glucosamine 6-phosphate (route II): step 2/2. Its pathway is nucleotide-sugar biosynthesis; UDP-N-acetyl-alpha-D-glucosamine biosynthesis; UDP-N-acetyl-alpha-D-glucosamine from N-acetyl-alpha-D-glucosamine 1-phosphate: step 1/1. It participates in bacterial outer membrane biogenesis; LPS lipid A biosynthesis. Functionally, catalyzes the last two sequential reactions in the de novo biosynthetic pathway for UDP-N-acetylglucosamine (UDP-GlcNAc). The C-terminal domain catalyzes the transfer of acetyl group from acetyl coenzyme A to glucosamine-1-phosphate (GlcN-1-P) to produce N-acetylglucosamine-1-phosphate (GlcNAc-1-P), which is converted into UDP-GlcNAc by the transfer of uridine 5-monophosphate (from uridine 5-triphosphate), a reaction catalyzed by the N-terminal domain. In Maricaulis maris (strain MCS10) (Caulobacter maris), this protein is Bifunctional protein GlmU.